The chain runs to 89 residues: Small ribosomal subunit protein uS15 (89 aa).

The protein belongs to the universal ribosomal protein uS15 family. In terms of assembly, part of the 30S ribosomal subunit. Forms a bridge to the 50S subunit in the 70S ribosome, contacting the 23S rRNA.

One of the primary rRNA binding proteins, it binds directly to 16S rRNA where it helps nucleate assembly of the platform of the 30S subunit by binding and bridging several RNA helices of the 16S rRNA. Its function is as follows. Forms an intersubunit bridge (bridge B4) with the 23S rRNA of the 50S subunit in the ribosome. This Chromohalobacter salexigens (strain ATCC BAA-138 / DSM 3043 / CIP 106854 / NCIMB 13768 / 1H11) protein is Small ribosomal subunit protein uS15.